A 439-amino-acid polypeptide reads, in one-letter code: Putative myrosinase 3 (439 aa).

A signal peptide spans 1 to 19; that stretch reads MKFRALGLVLLLAVETCKA. Asparagine 33 carries an N-linked (GlcNAc...) asparagine glycan. Residues histidine 145, 190–191, and tyrosine 316 each bind a beta-D-glucoside; that span reads NQ. A glycan (N-linked (GlcNAc...) asparagine) is linked at asparagine 336. A beta-D-glucoside-binding residues include glutamate 386 and tryptophan 404. Catalysis depends on glutamate 386, which acts as the Nucleophile.

It belongs to the glycosyl hydrolase 1 family. In terms of tissue distribution, expressed specifically in stamens and petals.

The catalysed reaction is a thioglucoside + H2O = a sugar + a thiol.. The polypeptide is Putative myrosinase 3 (Arabidopsis thaliana (Mouse-ear cress)).